The sequence spans 377 residues: Probable G-protein coupled receptor 27 (377 aa).

Residues 1-24 (MANASEPGGGGGGAEAAALGLRLA) are Extracellular-facing. N-linked (GlcNAc...) asparagine glycosylation occurs at Asn3. Residues 25–45 (TLSLLLCVSLAGNVLFALLIV) traverse the membrane as a helical segment. Topologically, residues 46–56 (RERSLHRAPYY) are cytoplasmic. Residues 57–77 (LLLDLCLADGLRALACLPAVM) traverse the membrane as a helical segment. The Extracellular portion of the chain corresponds to 78 to 98 (LAARRAAAAAGTPPGALGCKL). A disulfide bond links Cys96 and Cys173. Residues 99–119 (LAFLAALFCFHAAFLLLGVGV) form a helical membrane-spanning segment. Residues 120–140 (TRYLAIAHHRFYAERLAGWPC) lie on the Cytoplasmic side of the membrane. A helical membrane pass occupies residues 141–161 (AAMLVCAAWALALAAAFPPVL). The Extracellular segment spans residues 162–183 (DGGGADDEDAPCALEQRPDGAP). Residues 184–204 (GALGFLLLLAAVVGATHLVYL) traverse the membrane as a helical segment. Residues 205-287 (RLLFFIHDRR…FKTEKRLCKM (83 aa)) lie on the Cytoplasmic side of the membrane. Residues 288 to 308 (FYAITLLFLLLWGPYVVASYL) traverse the membrane as a helical segment. Residues 309–322 (RVLVRPGAVPQAYL) lie on the Extracellular side of the membrane. Residues 323-343 (TASVWLTFAQAGINPVVCFLF) traverse the membrane as a helical segment. The Cytoplasmic segment spans residues 344 to 377 (NRELRDCFRAQFPCCQSPQATQATLPCDLKGIGL).

It belongs to the G-protein coupled receptor 1 family. As to expression, expressed as a 3.0 kb transcript, in whole brain, hippocampus, striatum, frontal cortex, thalamus, pons and hypothalamus. A lower molecular weight transcript was detected in all regions examined, except the hypothalamus.

Its subcellular location is the cell membrane. Its function is as follows. Orphan receptor. Possible candidate for amine-like G-protein coupled receptor. The sequence is that of Probable G-protein coupled receptor 27 (Gpr27) from Rattus norvegicus (Rat).